The following is a 310-amino-acid chain: Acetyl-coenzyme A carboxylase carboxyl transferase subunit beta (310 aa).

The CoA carboxyltransferase N-terminal domain occupies 27–296 (LWKKCPKCSA…PEFENEEELE (270 aa)). Residues cysteine 31, cysteine 34, cysteine 50, and cysteine 53 each coordinate Zn(2+). The C4-type zinc-finger motif lies at 31–53 (CPKCSAVLYRPELEKNLDVCPKC). Residues 285-310 (PEPEFENEEELEEEEMERPEPPDNVE) are disordered. Residues 287 to 310 (PEFENEEELEEEEMERPEPPDNVE) are compositionally biased toward acidic residues.

The protein belongs to the AccD/PCCB family. Acetyl-CoA carboxylase is a heterohexamer composed of biotin carboxyl carrier protein (AccB), biotin carboxylase (AccC) and two subunits each of ACCase subunit alpha (AccA) and ACCase subunit beta (AccD). Zn(2+) is required as a cofactor.

It localises to the cytoplasm. The enzyme catalyses N(6)-carboxybiotinyl-L-lysyl-[protein] + acetyl-CoA = N(6)-biotinyl-L-lysyl-[protein] + malonyl-CoA. It functions in the pathway lipid metabolism; malonyl-CoA biosynthesis; malonyl-CoA from acetyl-CoA: step 1/1. Functionally, component of the acetyl coenzyme A carboxylase (ACC) complex. Biotin carboxylase (BC) catalyzes the carboxylation of biotin on its carrier protein (BCCP) and then the CO(2) group is transferred by the transcarboxylase to acetyl-CoA to form malonyl-CoA. The sequence is that of Acetyl-coenzyme A carboxylase carboxyl transferase subunit beta from Hahella chejuensis (strain KCTC 2396).